The sequence spans 373 residues: 3-dehydroquinate synthase (373 aa).

Residues 74–79, 108–112, 132–133, Lys-145, Lys-154, and 172–175 contribute to the NAD(+) site; these read DAEAGK, GAATD, TT, and TLET. Glu-187, His-250, and His-266 together coordinate Zn(2+).

The protein belongs to the sugar phosphate cyclases superfamily. Dehydroquinate synthase family. Co(2+) serves as cofactor. It depends on Zn(2+) as a cofactor. The cofactor is NAD(+).

It localises to the cytoplasm. It carries out the reaction 7-phospho-2-dehydro-3-deoxy-D-arabino-heptonate = 3-dehydroquinate + phosphate. The protein operates within metabolic intermediate biosynthesis; chorismate biosynthesis; chorismate from D-erythrose 4-phosphate and phosphoenolpyruvate: step 2/7. Catalyzes the conversion of 3-deoxy-D-arabino-heptulosonate 7-phosphate (DAHP) to dehydroquinate (DHQ). The polypeptide is 3-dehydroquinate synthase (Nocardia farcinica (strain IFM 10152)).